Consider the following 355-residue polypeptide: Myosin-binding protein H-like (355 aa).

2 stretches are compositionally biased toward polar residues: residues 1–16 (META…SQRQ) and 31–41 (TSHQQEAGSPS). Residues 1-41 (METATTLEIASCSQRQVEAAADPADAKGPRTSHQQEAGSPS) are disordered. The residue at position 39 (S39) is a Phosphoserine. Positions 46–140 (PSIEEHPKIW…GGLQATATIN (95 aa)) constitute an Ig-like C2-type 1 domain. In terms of domain architecture, Fibronectin type-III spans 149–244 (PPQSIKLVDV…TADLAHIQKA (96 aa)). In terms of domain architecture, Ig-like C2-type 2 spans 262–346 (PKFTQPLADC…INALGEASVD (85 aa)). A disulfide bridge links C283 with C334. Position 322 is an omega-N-methylarginine (R322).

The protein belongs to the immunoglobulin superfamily. MyBP family. In terms of tissue distribution, expressed in the atria as well as in discrete puncta throughout the right ventricular wall and septum.

The protein localises to the cytoplasm. The protein resides in the myofibril. It localises to the sarcomere. In terms of biological role, myosin-binding protein which plays a role in cardiac function. Seems to regulate conduction in the atria and ventricular conduction systems. The protein is Myosin-binding protein H-like of Mus musculus (Mouse).